The following is a 534-amino-acid chain: Protein tweety homolog 2 (534 aa).

At 1-44 the chain is on the extracellular side; it reads MAAARVEYIAPWWVYWLHNFPHVDLSLRQKSPDFNPKDPGYQQT. Residues 45–65 form a helical membrane-spanning segment; sequence LLFVALIVALCAAVNLLFVSV. Residues 66–87 are Cytoplasmic-facing; sequence YLICLCCCKKEDETETKKTSSC. The chain crosses the membrane as a helical span at residues 88 to 108; it reads CVTWTAAVSGLLCCAAVGIGF. The Extracellular segment spans residues 109-213; sequence YGNSETNDGV…QTSTIEYYRW (105 aa). 2 residues coordinate Ca(2+): Glu-113 and Asp-116. Asn-129 carries an N-linked (GlcNAc...) asparagine glycan. The short motif at 164-166 is the RGD element; the sequence is RGD. Residue Asn-197 is glycosylated (N-linked (GlcNAc...) asparagine). A helical transmembrane segment spans residues 214–234; the sequence is LSYLLLFISYVVICLVTCVGL. Topologically, residues 235 to 240 are cytoplasmic; that stretch reads AKKSKC. The chain crosses the membrane as a helical span at residues 241–261; it reads LLLIMLCFGLIALMLSWTSLA. Residues 262–388 are Extracellular-facing; sequence LETSSAMGTS…IGICYDGVEG (127 aa). Cystine bridges form between Cys-274/Cys-382 and Cys-300/Cys-367. Asn-283 and Asn-352 each carry an N-linked (GlcNAc...) asparagine glycan. Residues 389 to 409 form a helical membrane-spanning segment; the sequence is MLYLGLFSLLAALAFTAMVCA. At 410 to 534 the chain is on the cytoplasmic side; the sequence is MPQAWKHLEA…SSIYSNVFPA (125 aa).

Belongs to the tweety family. Forms cis-homodimers in the presence of Ca(+2) and forms monomers and trans-dimers in the absence of Ca(2+).

It is found in the cell membrane. It carries out the reaction chloride(in) = chloride(out). It catalyses the reaction L-glutamate(out) = L-glutamate(in). In terms of biological role, may act as a calcium-independent, swelling-dependent volume-regulated anion channel (VRAC-swell) which plays a pivotal role in the process of regulatory volume decrease (RVD) in the brain through the efflux of anions like chloride and organic osmolytes like glutamate. Probable large-conductance Ca(2+)-activated chloride channel. This is Protein tweety homolog 2 (ttyh2) from Xenopus tropicalis (Western clawed frog).